Consider the following 104-residue polypeptide: Turripeptide OL55-like (104 aa).

Contains 8 disulfide bonds. As to expression, expressed by the venom duct.

The protein localises to the secreted. In terms of biological role, acts as a neurotoxin by inhibiting an ion channel. The polypeptide is Turripeptide OL55-like (Iotyrris cingulifera (Sea snail)).